The following is a 286-amino-acid chain: ATP synthase gamma chain (286 aa).

It belongs to the ATPase gamma chain family. F-type ATPases have 2 components, CF(1) - the catalytic core - and CF(0) - the membrane proton channel. CF(1) has five subunits: alpha(3), beta(3), gamma(1), delta(1), epsilon(1). CF(0) has three main subunits: a, b and c.

The protein resides in the cell inner membrane. Its function is as follows. Produces ATP from ADP in the presence of a proton gradient across the membrane. The gamma chain is believed to be important in regulating ATPase activity and the flow of protons through the CF(0) complex. This chain is ATP synthase gamma chain, found in Shewanella pealeana (strain ATCC 700345 / ANG-SQ1).